Consider the following 381-residue polypeptide: MSKRDFYEVLGVGRDASERDIKKAYKRLAMKYHPDRNSGDAGAAEKFKEVKEAYEILTDAQKKAAYDQYGHAAFEQGAGGFGGGGFGGGGADFGDIFGDVFGDIFGGGRRGGGPRAQRGSDLRYNMELSLEEAVRGCSKEIEVPTLVHCDACDGSGAKKGTSAQTCGTCHGHGQVQMRQGFFAVQQTCPTCHGKGKIIKDPCNVCHGQGRKQKTKTLNVKIPAGVDTGDRIRLSGEGEAGEMGAPAGDLYVQVHVKEHHIFERDGNNLYCEVPVSFAMAALGGEVEVPTLDGRVSLKVPAETQTGRMFRMRGKGVKGVRSAALGDLIVKLVVETPVNLSARQKELLKEFEESCGGEAATKHKPKAEGFFNGVKKFFDDLTS.

One can recognise a J domain in the interval 5 to 70 (DFYEVLGVGR…QKKAAYDQYG (66 aa)). The segment at 136-214 (GCSKEIEVPT…CHGQGRKQKT (79 aa)) adopts a CR-type zinc-finger fold. Residues C149, C152, C166, C169, C188, C191, C202, and C205 each contribute to the Zn(2+) site. CXXCXGXG motif repeat units follow at residues 149–156 (CDACDGSG), 166–173 (CGTCHGHG), 188–195 (CPTCHGKG), and 202–209 (CNVCHGQG).

This sequence belongs to the DnaJ family. Homodimer. Zn(2+) is required as a cofactor.

The protein localises to the cytoplasm. Functionally, participates actively in the response to hyperosmotic and heat shock by preventing the aggregation of stress-denatured proteins and by disaggregating proteins, also in an autonomous, DnaK-independent fashion. Unfolded proteins bind initially to DnaJ; upon interaction with the DnaJ-bound protein, DnaK hydrolyzes its bound ATP, resulting in the formation of a stable complex. GrpE releases ADP from DnaK; ATP binding to DnaK triggers the release of the substrate protein, thus completing the reaction cycle. Several rounds of ATP-dependent interactions between DnaJ, DnaK and GrpE are required for fully efficient folding. Also involved, together with DnaK and GrpE, in the DNA replication of plasmids through activation of initiation proteins. The sequence is that of Chaperone protein DnaJ from Vibrio cholerae serotype O1 (strain ATCC 39541 / Classical Ogawa 395 / O395).